The primary structure comprises 227 residues: Holliday junction branch migration complex subunit RuvA (227 aa).

A domain I region spans residues 1–64 (MFESISGILT…EDALRLFGFS (64 aa)). The tract at residues 65 to 143 (NVQERTLFLS…LTDAASCAQS (79 aa)) is domain II. Positions 144 to 158 (QTDDRAAHPSNLGCA) are flexible linker. The tract at residues 159 to 227 (PHAREIEDLV…HPHAVAPAAE (69 aa)) is domain III.

It belongs to the RuvA family. As to quaternary structure, homotetramer. Forms an RuvA(8)-RuvB(12)-Holliday junction (HJ) complex. HJ DNA is sandwiched between 2 RuvA tetramers; dsDNA enters through RuvA and exits via RuvB. An RuvB hexamer assembles on each DNA strand where it exits the tetramer. Each RuvB hexamer is contacted by two RuvA subunits (via domain III) on 2 adjacent RuvB subunits; this complex drives branch migration. In the full resolvosome a probable DNA-RuvA(4)-RuvB(12)-RuvC(2) complex forms which resolves the HJ.

The protein resides in the cytoplasm. Functionally, the RuvA-RuvB-RuvC complex processes Holliday junction (HJ) DNA during genetic recombination and DNA repair, while the RuvA-RuvB complex plays an important role in the rescue of blocked DNA replication forks via replication fork reversal (RFR). RuvA specifically binds to HJ cruciform DNA, conferring on it an open structure. The RuvB hexamer acts as an ATP-dependent pump, pulling dsDNA into and through the RuvAB complex. HJ branch migration allows RuvC to scan DNA until it finds its consensus sequence, where it cleaves and resolves the cruciform DNA. The protein is Holliday junction branch migration complex subunit RuvA of Treponema pallidum (strain Nichols).